The chain runs to 215 residues: MEEGKRWIAVPTWRVPGRMERWHSLIKYLKYRTGDLEKVCYVPHHKVGWAWWTCSRVIFPLKGESHLEIQAYWNLTPEKGWLSSYSVRLTWYTEKFWTDVTPDCADSLIHSTYFSCFTAGEVRRAIRGEKLLSCCNYPQAHKYQVPSLQFLALVVVQQNGRPQRDNTTRKQWRRNYRRGLRVARQDGRSHKQRGSEPPAPRAYFPGVAKVLEILA.

Thr98 is modified (phosphothreonine; by host MAP4K1). Positions His110–His141 match the HCCH motif motif. Ser147 bears the Phosphoserine; by host mark. The BC-box-like motif motif lies at Ser147–Val156. The tract at residues Val154–Thr167 is multimerization.

This sequence belongs to the primate lentivirus group Vif protein family. As to quaternary structure, homomultimer; in vitro and presumably in vivo. Interacts with viral Pr55Gag precursor and human APOBEC3G. The interaction between Vif and APOBEC3G is species-specific, which may play a role in restricting the replication of HIV to humans. Forms an E3 ligase complex by interacting with human CUL5 and elongin BC complex (ELOB and ELOC). In terms of processing, processed in virion by the viral protease. Highly phosphorylated on serine and threonine residues. Post-translationally, polyubiquitinated and degraded by the proteasome in the presence of APOBEC3G.

The protein localises to the host cytoplasm. The protein resides in the host cell membrane. It is found in the virion. In terms of biological role, counteracts the innate antiviral activity of APOBEC3G. Forms a complex with host APOBEC3G thus preventing the entry of this lethally hypermutating enzyme into progeny virions. Functions as an adapter molecule, recruiting APOBEC3G to the ubiquitin-proteasome machinery. Targets APOBEC3G for degradation through the assembly with elongin BC complex, CUL5 and RBX1. Binds viral RNA and affects the stability of viral nucleoprotein core. May play a role in viral morphology. This is Virion infectivity factor (vif) from Homo sapiens (Human).